The chain runs to 371 residues: Aminomethyltransferase (371 aa).

It belongs to the GcvT family. As to quaternary structure, the glycine cleavage system is composed of four proteins: P, T, L and H.

It carries out the reaction N(6)-[(R)-S(8)-aminomethyldihydrolipoyl]-L-lysyl-[protein] + (6S)-5,6,7,8-tetrahydrofolate = N(6)-[(R)-dihydrolipoyl]-L-lysyl-[protein] + (6R)-5,10-methylene-5,6,7,8-tetrahydrofolate + NH4(+). Functionally, the glycine cleavage system catalyzes the degradation of glycine. This chain is Aminomethyltransferase, found in Cellvibrio japonicus (strain Ueda107) (Pseudomonas fluorescens subsp. cellulosa).